Consider the following 447-residue polypeptide: BAG family molecular chaperone regulator 5 (447 aa).

BAG domains are found at residues 9-86, 95-167, 182-260, 275-350, and 365-442; these read SISR…EQNA, QNIF…EDCM, SVAK…DLEE, SILK…DLKE, and SHKA…DLKS.

As to quaternary structure, binds to the ATPase domain of HSP/HSP70 chaperones. Binds PRKN. Interacts with HSPA8 and JPH2. Expressed in the heart.

Functionally, co-chaperone for HSP/HSP70 proteins. It functions as a nucleotide-exchange factor promoting the release of ADP from HSP70, thereby activating HSP70-mediated protein refolding. Has an essential role in maintaining proteostasis at junctional membrane complexes (JMC), where it may function as a scaffold between the HSPA8 chaperone and JMC proteins enabling correct, HSPA8-dependent JMC protein folding. Inhibits both auto-ubiquitination of PRKN and ubiquitination of target proteins by PRKN. This chain is BAG family molecular chaperone regulator 5 (BAG5), found in Homo sapiens (Human).